Consider the following 336-residue polypeptide: Tetraacyldisaccharide 4'-kinase (336 aa).

60 to 67 is a binding site for ATP; sequence TIGGTGKT.

Belongs to the LpxK family.

It carries out the reaction a lipid A disaccharide + ATP = a lipid IVA + ADP + H(+). Its pathway is glycolipid biosynthesis; lipid IV(A) biosynthesis; lipid IV(A) from (3R)-3-hydroxytetradecanoyl-[acyl-carrier-protein] and UDP-N-acetyl-alpha-D-glucosamine: step 6/6. In terms of biological role, transfers the gamma-phosphate of ATP to the 4'-position of a tetraacyldisaccharide 1-phosphate intermediate (termed DS-1-P) to form tetraacyldisaccharide 1,4'-bis-phosphate (lipid IVA). This chain is Tetraacyldisaccharide 4'-kinase, found in Pseudomonas putida (strain W619).